The primary structure comprises 37 residues: Large ribosomal subunit protein bL36c (37 aa).

The protein belongs to the bacterial ribosomal protein bL36 family.

The protein resides in the plastid. Its subcellular location is the chloroplast. The polypeptide is Large ribosomal subunit protein bL36c (rpl36) (Marchantia polymorpha (Common liverwort)).